The following is a 278-amino-acid chain: Release factor glutamine methyltransferase (278 aa).

S-adenosyl-L-methionine is bound by residues Gly116 to Gly120, Asp139, Trp168, and Asn182. Asn182–Tyr185 lines the substrate pocket.

The protein belongs to the protein N5-glutamine methyltransferase family. PrmC subfamily.

The catalysed reaction is L-glutaminyl-[peptide chain release factor] + S-adenosyl-L-methionine = N(5)-methyl-L-glutaminyl-[peptide chain release factor] + S-adenosyl-L-homocysteine + H(+). Methylates the class 1 translation termination release factors RF1/PrfA and RF2/PrfB on the glutamine residue of the universally conserved GGQ motif. This is Release factor glutamine methyltransferase from Cereibacter sphaeroides (strain ATCC 17023 / DSM 158 / JCM 6121 / CCUG 31486 / LMG 2827 / NBRC 12203 / NCIMB 8253 / ATH 2.4.1.) (Rhodobacter sphaeroides).